A 160-amino-acid polypeptide reads, in one-letter code: MAEKTYPMTLEEKEKLEKELEELKLVRRPEVVERIKIARSYGDLSENSEYEAAKDEQAFVEGQISSLETKIRYAEIVNSDAVAKDEVAIGKTVTIQEVGESEEEVYIIVGSAGADAFAGKVSNESPIGQALIGKKTGDTATVETPVGSYDVKILKVEKTV.

A coiled-coil region spans residues Met1–Arg72.

Belongs to the GreA/GreB family.

Necessary for efficient RNA polymerase transcription elongation past template-encoded arresting sites. The arresting sites in DNA have the property of trapping a certain fraction of elongating RNA polymerases that pass through, resulting in locked ternary complexes. Cleavage of the nascent transcript by cleavage factors such as GreA or GreB allows the resumption of elongation from the new 3'terminus. GreA releases sequences of 2 to 3 nucleotides. The polypeptide is Transcription elongation factor GreA (Streptococcus sanguinis (strain SK36)).